A 580-amino-acid polypeptide reads, in one-letter code: Alpha-thujene synthase, chloroplastic (580 aa).

The N-terminal 32 residues, 1-32 (MALQLLTPSFSFQHSPSPHKLTTLRYTHHRIR), are a transit peptide targeting the chloroplast. 5 residues coordinate (2E)-geranyl diphosphate: R296, D333, D337, R473, and D476. Positions 333 and 337 each coordinate Mg(2+). The DDXXD motif motif lies at 333 to 337 (DDVYD). D476, T480, and E484 together coordinate Mg(2+).

Belongs to the terpene synthase family. Tpsb subfamily. As to quaternary structure, monomer. Mg(2+) is required as a cofactor. The cofactor is Mn(2+). In terms of tissue distribution, expressed in developing and mature fruits. Barely detectable in leaves and shoots.

Its subcellular location is the plastid. The protein localises to the chloroplast. It catalyses the reaction (2E)-geranyl diphosphate = alpha-thujene + diphosphate. It functions in the pathway secondary metabolite biosynthesis; terpenoid biosynthesis. In terms of biological role, monoterpene synthase (TPS) involved in the biosynthesis of monoterpene natural products used by traditional Chinese medicine to treat headache, inflammation and intoxication. Catalyzes the conversion of (2E)-geranyl diphosphate (GPP) into alpha-thujene. This chain is Alpha-thujene synthase, chloroplastic, found in Litsea cubeba (Aromatic litsea).